The primary structure comprises 1171 residues: ATP-dependent helicase/deoxyribonuclease subunit B (1171 aa).

The region spanning 1–390 is the UvrD-like helicase ATP-binding domain; the sequence is MSLRFVIGRA…HPLVECIRSA (390 aa). 8–15 provides a ligand contact to ATP; the sequence is GRAGSGKS. A UvrD-like helicase C-terminal domain is found at 281-587; the sequence is MEQPRFHSPA…QFANIPPSLD (307 aa). [4Fe-4S] cluster-binding residues include C805, C1129, C1132, and C1138.

It belongs to the helicase family. AddB/RexB type 1 subfamily. As to quaternary structure, heterodimer of AddA and AddB. It depends on Mg(2+) as a cofactor. The cofactor is [4Fe-4S] cluster.

Its function is as follows. The heterodimer acts as both an ATP-dependent DNA helicase and an ATP-dependent, dual-direction single-stranded exonuclease. Recognizes the chi site generating a DNA molecule suitable for the initiation of homologous recombination. The AddB subunit has 5' -&gt; 3' nuclease activity but not helicase activity. In Bacillus cereus (strain ZK / E33L), this protein is ATP-dependent helicase/deoxyribonuclease subunit B.